Here is a 346-residue protein sequence, read N- to C-terminus: Probable 3-hydroxyacyl-CoA dehydrogenase (346 aa).

Positions R322–P346 are disordered.

This sequence belongs to the 3-hydroxyacyl-CoA dehydrogenase family.

The catalysed reaction is a (3S)-3-hydroxyacyl-CoA + NAD(+) = a 3-oxoacyl-CoA + NADH + H(+). In Deinococcus radiodurans (strain ATCC 13939 / DSM 20539 / JCM 16871 / CCUG 27074 / LMG 4051 / NBRC 15346 / NCIMB 9279 / VKM B-1422 / R1), this protein is Probable 3-hydroxyacyl-CoA dehydrogenase.